We begin with the raw amino-acid sequence, 231 residues long: DNA damage response protein C (231 aa).

In terms of assembly, homodimer.

The protein localises to the cytoplasm. It is found in the nucleoid. Functionally, appears to contribute to D.radiodurans capacity to survive exposure to ionizing radiation. Likely functions as a DNA damage-induced nucleoid-associated protein (NAP) that contributes to the enhanced level of nucleoid compaction after irradiation by bridging DNA duplexes, thereby limiting the dispersion of the fragmented genome immediately after irradiation to facilitate subsequent DNA repair. In vitro, binds both ssDNA and dsDNA, and is able to compact circular DNA, circularize linear DNA, anneal complementary DNA strands and protect DNA from nucleases. The sequence is that of DNA damage response protein C from Deinococcus radiodurans (strain ATCC 13939 / DSM 20539 / JCM 16871 / CCUG 27074 / LMG 4051 / NBRC 15346 / NCIMB 9279 / VKM B-1422 / R1).